Consider the following 338-residue polypeptide: UDP-glucose 4-epimerase (338 aa).

NAD(+)-binding positions include 11–12, 31–36, 58–59, 80–84, Asn99, Ser124, Tyr149, Lys153, and Phe178; these read YI, DNLCNS, DI, and FAGLK. Positions 124 and 149 each coordinate substrate. The active-site Proton acceptor is the Tyr149. Substrate-binding positions include Asn179, 199–200, 216–218, Arg231, and 292–295; these read NL, SVF, and RPGD.

The protein belongs to the NAD(P)-dependent epimerase/dehydratase family. In terms of assembly, homodimer. The cofactor is NAD(+).

The catalysed reaction is UDP-alpha-D-glucose = UDP-alpha-D-galactose. Its pathway is carbohydrate metabolism; galactose metabolism. Its function is as follows. Involved in the metabolism of galactose. Catalyzes the conversion of UDP-galactose (UDP-Gal) to UDP-glucose (UDP-Glc) through a mechanism involving the transient reduction of NAD. The sequence is that of UDP-glucose 4-epimerase (galE) from Pasteurella multocida (strain Pm70).